A 554-amino-acid chain; its full sequence is Phosphoglucomutase (554 aa).

Residue R21 coordinates alpha-D-glucose 1,6-bisphosphate. T111 is modified (phosphothreonine). Residue S113 participates in alpha-D-glucose 1,6-bisphosphate binding. The active-site Phosphoserine intermediate is the S113. Residues S113, D278, D280, and D282 each contribute to the Mg(2+) site. S113 carries the post-translational modification Phosphoserine. Positions 282, 283, 346, 365, 367, and 378 each coordinate alpha-D-glucose 1,6-bisphosphate.

This sequence belongs to the phosphohexose mutase family. Monomer. It depends on Mg(2+) as a cofactor.

Its subcellular location is the cytoplasm. It localises to the nucleus. The catalysed reaction is alpha-D-glucose 1-phosphate = alpha-D-glucose 6-phosphate. It carries out the reaction O-phospho-L-seryl-[protein] + alpha-D-glucose 1-phosphate = alpha-D-glucose 1,6-bisphosphate + L-seryl-[protein]. It catalyses the reaction alpha-D-glucose 1,6-bisphosphate + L-seryl-[protein] = O-phospho-L-seryl-[protein] + alpha-D-glucose 6-phosphate. In terms of biological role, catalyzes the reversible isomerization of alpha-D-glucose 1-phosphate to alpha-D-glucose 6-phosphate. The mechanism proceeds via the intermediate compound alpha-D-glucose 1,6-bisphosphate. Key enzyme in hexose metabolism. The reverse reaction is an essential step for biosynthesis because glucose 1-phosphate is the starting point for the synthesis of UDP-glucose, which acts as a precursor for the synthesis of oligosaccharides and trehalose. The protein is Phosphoglucomutase of Schizosaccharomyces pombe (strain 972 / ATCC 24843) (Fission yeast).